Consider the following 168-residue polypeptide: MSNLLNKFADKLHGNDHDERYEDDNDDQTRQQRHEKHQQREFRNQGSKADPYGEENQGNFPQRQQPQSNLGGNTQFGGNDFQQQTTDYTAGTGGGTYTQTYRETNTQGQLDDDEDDDFLTSGQQQKQGRTRGAQSNRYQSSNIGSGRRDLSGSGNDEYDDDSGNQGVW.

Residues 1–168 are disordered; the sequence is MSNLLNKFAD…DDDSGNQGVW (168 aa). Composition is skewed to basic and acidic residues over residues 8–20 and 27–43; these read FADKLHGNDHDER and DQTRQQRHEKHQQREFR. Composition is skewed to polar residues over residues 56-81 and 120-144; these read NQGNFPQRQQPQSNLGGNTQFGGNDF and TSGQQQKQGRTRGAQSNRYQSSNIG.

Its subcellular location is the cytoplasm. The chain is Protein GRE1 (GRE1) from Saccharomyces cerevisiae (strain ATCC 204508 / S288c) (Baker's yeast).